Consider the following 206-residue polypeptide: MARYIGPKCKLARREGTDLFLKSARRALDSKCKLDAAPGQHGARRGRLSDYGVQLREKQKIRRIYGVLERQFRNYFAEAVRRKGSTGENLLKLLESRLDNVVYRMGFGSTRAEARQLVSHKAIVVNGQVVNIPSYQVKAGDVVSVREKAKKQARIVEGLALAEQGGFPSWVSVDSKKMEGTFKSAPERSELSSDINEQLVVEFYSK.

Residues 96 to 159 (SRLDNVVYRM…KKQARIVEGL (64 aa)) form the S4 RNA-binding domain.

This sequence belongs to the universal ribosomal protein uS4 family. In terms of assembly, part of the 30S ribosomal subunit. Contacts protein S5. The interaction surface between S4 and S5 is involved in control of translational fidelity.

Functionally, one of the primary rRNA binding proteins, it binds directly to 16S rRNA where it nucleates assembly of the body of the 30S subunit. Its function is as follows. With S5 and S12 plays an important role in translational accuracy. The protein is Small ribosomal subunit protein uS4 of Chromobacterium violaceum (strain ATCC 12472 / DSM 30191 / JCM 1249 / CCUG 213 / NBRC 12614 / NCIMB 9131 / NCTC 9757 / MK).